A 70-amino-acid polypeptide reads, in one-letter code: Putative ankyrin repeat protein RC0502 (70 aa).

The ANK repeat unit spans residues 9 to 43; that stretch reads KGRIPIHYATYSKQHEITQILILLQPGSEIDTVDN.

The protein is Putative ankyrin repeat protein RC0502 of Rickettsia conorii (strain ATCC VR-613 / Malish 7).